We begin with the raw amino-acid sequence, 1122 residues long: Adhesin P1 (1122 aa).

The N-terminal stretch at 1-26 (MKKLIFKLSVGITPLALIGLGSFGLA) is a signal peptide. 3 disordered regions span residues 182-208 (ATGD…GGGA), 244-273 (DYNS…GGRT), and 541-562 (GALQ…SNGN). A compositionally biased stretch (gly residues) spans 195–208 (AGGGSSSSAAGGGA). Polar residues predominate over residues 259 to 273 (LDSSESSESINGGRT). The chain crosses the membrane as a helical span at residues 1001-1021 (AISIPIIIIALALALGLGIGI). A disordered region spans residues 1066 to 1122 (KTPQMLQANKKDGASSPSKPSAPAAKKPAGPTKPSAPGAKPTAPAKPKAPAPTKKIE). Residues 1079–1122 (ASSPSKPSAPAAKKPAGPTKPSAPGAKPTAPAKPKAPAPTKKIE) are compositionally biased toward low complexity.

The protein belongs to the adhesin P1 family.

Its subcellular location is the cell membrane. Functionally, could be involved in cytadherence. This is Adhesin P1 (gapA) from Mycoplasmoides gallisepticum (strain R(low / passage 15 / clone 2)) (Mycoplasma gallisepticum).